A 408-amino-acid polypeptide reads, in one-letter code: AA9 family lytic polysaccharide monooxygenase A (408 aa).

Residues 1–20 form the signal peptide; it reads MKTTTYSLLALAAASKLASA. Cu(2+) contacts are provided by histidine 21 and histidine 103. Cysteine 63 and cysteine 186 are oxidised to a cystine. Asparagine 151 is a glycosylation site (N-linked (GlcNAc...) asparagine). O2 is bound at residue histidine 172. Tyrosine 183 provides a ligand contact to Cu(2+). 2 N-linked (GlcNAc...) asparagine glycosylation sites follow: asparagine 331 and asparagine 381. Positions 369-405 constitute a CBM1 domain; sequence GVAKQYERCGGINHTGPTTCESGSVCKKWNPYYYQCV.

Belongs to the polysaccharide monooxygenase AA9 family. The cofactor is Cu(2+).

It localises to the secreted. The enzyme catalyses [(1-&gt;4)-beta-D-glucosyl]n+m + reduced acceptor + O2 = 4-dehydro-beta-D-glucosyl-[(1-&gt;4)-beta-D-glucosyl]n-1 + [(1-&gt;4)-beta-D-glucosyl]m + acceptor + H2O.. Functionally, lytic polysaccharide monooxygenase (LPMO) that depolymerizes crystalline and amorphous polysaccharides via the oxidation of scissile alpha- or beta-(1-4)-glycosidic bonds, yielding C4 oxidation products. Catalysis by LPMOs requires the reduction of the active-site copper from Cu(II) to Cu(I) by a reducing agent and H(2)O(2) or O(2) as a cosubstrate. This chain is AA9 family lytic polysaccharide monooxygenase A (eglD), found in Aspergillus kawachii (strain NBRC 4308) (White koji mold).